The following is a 282-amino-acid chain: Pantothenate synthetase (282 aa).

30 to 37 contributes to the ATP binding site; sequence MGALHAGH. Histidine 37 serves as the catalytic Proton donor. (R)-pantoate is bound at residue glutamine 61. Residue glutamine 61 coordinates beta-alanine. An ATP-binding site is contributed by 147-150; the sequence is GEKD. Residue glutamine 153 coordinates (R)-pantoate. Residues valine 176 and 184–187 each bind ATP; that span reads LSSR.

This sequence belongs to the pantothenate synthetase family. As to quaternary structure, homodimer.

It is found in the cytoplasm. It carries out the reaction (R)-pantoate + beta-alanine + ATP = (R)-pantothenate + AMP + diphosphate + H(+). The protein operates within cofactor biosynthesis; (R)-pantothenate biosynthesis; (R)-pantothenate from (R)-pantoate and beta-alanine: step 1/1. In terms of biological role, catalyzes the condensation of pantoate with beta-alanine in an ATP-dependent reaction via a pantoyl-adenylate intermediate. This Bacteroides fragilis (strain YCH46) protein is Pantothenate synthetase.